A 200-amino-acid polypeptide reads, in one-letter code: Putative NAD(P)H nitroreductase Spy0809 (200 aa).

It depends on FMN as a cofactor.

The polypeptide is Putative NAD(P)H nitroreductase Spy0809 (Streptococcus pyogenes serotype M6 (strain ATCC BAA-946 / MGAS10394)).